Consider the following 396-residue polypeptide: Tryptophan synthase beta chain (396 aa).

Lysine 88 is subject to N6-(pyridoxal phosphate)lysine.

This sequence belongs to the TrpB family. As to quaternary structure, tetramer of two alpha and two beta chains. Requires pyridoxal 5'-phosphate as cofactor.

The catalysed reaction is (1S,2R)-1-C-(indol-3-yl)glycerol 3-phosphate + L-serine = D-glyceraldehyde 3-phosphate + L-tryptophan + H2O. It participates in amino-acid biosynthesis; L-tryptophan biosynthesis; L-tryptophan from chorismate: step 5/5. In terms of biological role, the beta subunit is responsible for the synthesis of L-tryptophan from indole and L-serine. In Shewanella baltica (strain OS185), this protein is Tryptophan synthase beta chain.